A 581-amino-acid polypeptide reads, in one-letter code: MTDFDLMNFPFHERLDSPVSENGEIKDGEPIPQNWLNENHVGKSILPLFVNPEDVINCNFSNARDSYEENKSPSMDQMNYARNTSYQESPGLQERPKNEKDKSPIGTDVHKKDVPNFIHSTPRENSSKHFTRANEQASAQPTDEHTSPDISIEDCNGAKIFLQNSLSKEDFRMLENVILGYQKKVIELGRDNLRQEERANSLQKELEAATKSNDKTLDNKKKIEEQTVLIENLTKDLSLNKEMLEKANDTIQTKHTALLSLTDSLRKAELFEIPIGILFFDLYDSEENSSKLDHILQEKYPNIKGFLCASQQEELSRISQRFKNAKAEAEDLRNELENKKIEIQTMREKNNTLIGTNKTLSKQNKILCDKFDKLTIDEKEILKGCNEEIKIKLERLNERLGSWEKSKEKYETSLKDKEKMLADAEKKTNTLSKELDNLRSRFGNLEGNTSERITIKNILQSRPDISAEECNFLMVEQIDSANLTTLQNTVKEIVLAVGIPYPKLRRKIPLLAIKLKYENIMLSNFAQRLHRQVYSQEMNLKKFTDQAYYDFMSTRRMDSIDHHLERCLDHLYDHILEKMVK.

Ser17, Ser20, Ser72, Ser85, and Ser89 each carry phosphoserine. The tract at residues 86–150 is disordered; that stretch reads YQESPGLQER…PTDEHTSPDI (65 aa). Over residues 94 to 114 the composition is skewed to basic and acidic residues; that stretch reads ERPKNEKDKSPIGTDVHKKDV. A Phosphoserine modification is found at Ser151. Coiled coils occupy residues 179–252, 306–363, and 373–451; these read LGYQ…DTIQ, FLCA…LSKQ, and KLTI…NTSE.

In terms of assembly, interacts directly with ADY3 and YOR129C. Interacts with ADY4. Probable component of a SPB complex composed of ADY3, SSP1, DON1, MPC54, SPO21/MPC70, NUD1 and CNM67. In terms of processing, phosphorylated in its N-terminal part.

The protein localises to the cytoplasm. The protein resides in the cytoskeleton. It localises to the microtubule organizing center. It is found in the spindle pole body. In terms of biological role, involved in the pathway that organizes the shaping and sizing of the prospore membrane (PSM) during sporulation. Required for the proper formation of the spindle pole body (SPB) outer plaque. May connect the outer plaque to the central plaque embedded in the nuclear envelope. The sequence is that of Chaotic nuclear migration protein 67 (CNM67) from Saccharomyces cerevisiae (strain ATCC 204508 / S288c) (Baker's yeast).